The sequence spans 546 residues: Probable Xaa-Pro aminopeptidase pepP (546 aa).

Mn(2+) is bound by residues D341, D352, E475, and E515.

This sequence belongs to the peptidase M24B family. The cofactor is Mn(2+).

It catalyses the reaction Release of any N-terminal amino acid, including proline, that is linked to proline, even from a dipeptide or tripeptide.. Catalyzes the removal of a penultimate prolyl residue from the N-termini of peptides. This chain is Probable Xaa-Pro aminopeptidase pepP (pepP), found in Sclerotinia sclerotiorum (strain ATCC 18683 / 1980 / Ss-1) (White mold).